Consider the following 445-residue polypeptide: Meiosis-specific serine/threonine-protein kinase mek1 (445 aa).

The 55-residue stretch at Val62–Ile116 folds into the FHA domain. One can recognise a Protein kinase domain in the interval Asn160–Phe421. ATP-binding positions include Leu166–Ile174 and Lys189. The active-site Proton acceptor is Asp281.

It belongs to the protein kinase superfamily. CAMK Ser/Thr protein kinase family. CHEK2 subfamily.

The catalysed reaction is L-seryl-[protein] + ATP = O-phospho-L-seryl-[protein] + ADP + H(+). The enzyme catalyses L-threonyl-[protein] + ATP = O-phospho-L-threonyl-[protein] + ADP + H(+). In terms of biological role, probable protein kinase required for meiotic recombination. This Schizosaccharomyces pombe (strain 972 / ATCC 24843) (Fission yeast) protein is Meiosis-specific serine/threonine-protein kinase mek1 (mek1).